The chain runs to 234 residues: Ribosomal RNA small subunit methyltransferase G (234 aa).

S-adenosyl-L-methionine-binding positions include Gly-74, Phe-79, 125 to 126, and Arg-144; that span reads AE.

The protein belongs to the methyltransferase superfamily. RNA methyltransferase RsmG family.

Its subcellular location is the cytoplasm. Functionally, specifically methylates the N7 position of a guanine in 16S rRNA. This is Ribosomal RNA small subunit methyltransferase G from Roseiflexus castenholzii (strain DSM 13941 / HLO8).